A 303-amino-acid chain; its full sequence is Bifunctional protein FolD (303 aa).

NADP(+)-binding positions include 175–177 and Ile-243; that span reads GVS.

The protein belongs to the tetrahydrofolate dehydrogenase/cyclohydrolase family. In terms of assembly, homodimer.

The catalysed reaction is (6R)-5,10-methylene-5,6,7,8-tetrahydrofolate + NADP(+) = (6R)-5,10-methenyltetrahydrofolate + NADPH. It carries out the reaction (6R)-5,10-methenyltetrahydrofolate + H2O = (6R)-10-formyltetrahydrofolate + H(+). It functions in the pathway one-carbon metabolism; tetrahydrofolate interconversion. Catalyzes the oxidation of 5,10-methylenetetrahydrofolate to 5,10-methenyltetrahydrofolate and then the hydrolysis of 5,10-methenyltetrahydrofolate to 10-formyltetrahydrofolate. The protein is Bifunctional protein FolD of Xanthomonas oryzae pv. oryzae (strain PXO99A).